We begin with the raw amino-acid sequence, 463 residues long: MGKEKTHINIVVIGHVDSGKSTTTGHLIYKCGGIDKRTIEKFEKEAQEMGKGSFKYAWVLDKLKAERERGITIDIALWKFETSKYYVTIIDAPGHRDFIKNMITGTSQADCAVLIVAAGTGEFEAGISKNGQTREHALLAFTLGVKQLIVGVNKMDSTEPPYSEPRFEEIKKEVSSYIKKIGYNPAAVAFVPISGWHGDNMLEPSTKMPWFKGWQVERKEGKADGKSLIEALDAILPPARPTDKPLRLPLQDVYKIGGIGTVPVGRVETGVLKPGTIVVFAPANITTEVKSVEMHHEALQEAVPGDNVGFNVKNVSVKELRRGYVAGDSKNNPPKGAADFTAQVIVLNHPGQISNGYTPVLDCHTAHIACKFAEIKEKVDRRTGKSTEVNPKSIKSGDAAIVNLVPSKPLCVESFQEFPPLGRFAVRDMRQTVAVGVIKAVNFKEAGGGKVTKAAEKATKGKK.

The region spanning lysine 5 to threonine 242 is the tr-type G domain. The G1 stretch occupies residues glycine 14–serine 21. Glycine 14–serine 21 lines the GTP pocket. Residues glycine 70–aspartate 74 form a G2 region. The tract at residues aspartate 91 to glycine 94 is G3. GTP is bound by residues aspartate 91 to histidine 95 and asparagine 153 to aspartate 156. The interval asparagine 153 to aspartate 156 is G4. The interval serine 194–tryptophan 196 is G5. 5-glutamyl glycerylphosphorylethanolamine occurs at positions 301 and 374.

The protein belongs to the TRAFAC class translation factor GTPase superfamily. Classic translation factor GTPase family. EF-Tu/EF-1A subfamily.

Its subcellular location is the cytoplasm. This protein promotes the GTP-dependent binding of aminoacyl-tRNA to the A-site of ribosomes during protein biosynthesis. In Bombyx mori (Silk moth), this protein is Elongation factor 1-alpha.